A 72-amino-acid chain; its full sequence is UPF0270 protein YheU (72 aa).

The protein belongs to the UPF0270 family.

The chain is UPF0270 protein YheU from Salmonella dublin (strain CT_02021853).